A 542-amino-acid polypeptide reads, in one-letter code: Cytochrome P450 734A6 (542 aa).

A helical transmembrane segment spans residues 2–22 (GWWGWAAAAAAAAAWVAVKVL). Position 474 (Cys474) interacts with heme.

This sequence belongs to the cytochrome P450 family. The cofactor is heme. In terms of tissue distribution, highly expressed in leaf sheaths. Expressed in roots, shoot apex, leaf blades, internodes and panicles.

The protein resides in the membrane. Cytochrome P450 involved in brassinosteroids (BRs) inactivation and regulation of BRs homeostasis. Is a multifunctional and multisubstrate enzyme that controls the endogenous bioactive BR content both by direct inactivation of castasterone (CS) and by decreasing the levels of BR precursors. Catalyzes the oxidation of carbon 22 hydroxylated BR intermediates to produce C26 oxidized metabolites. This chain is Cytochrome P450 734A6 (CYP734A6), found in Oryza sativa subsp. japonica (Rice).